Consider the following 233-residue polypeptide: MKRKRCEMEETTKKKKMTEIGSAIEELSVLSIAKTTIVTTEKEAINIINLPLKPLLSFCNIIVQVLDKIGPTMAVLRHDIDQNIQRLEKMWESDPLVYSNLVEILRKEAKEGSSRKPKSCSRAALWLTRAMDFTLALLQRLVKDMSQNMEQAIEECYNLTIKPWHGWISSAAFKVALKLVPNNNTFINVLAAKDETHQMVQDDITSLISLLIPLLSQLHSILELYEVSKLKSP.

Aspartate 79, asparagine 83, tryptophan 126, and histidine 165 together coordinate a ganglioside GM3 (d18:1(4E)).

This sequence belongs to the GLTP family.

May be involved in glycolipids transfer. The chain is Glycolipid transfer protein 3 from Arabidopsis thaliana (Mouse-ear cress).